The sequence spans 947 residues: Plasma membrane ATPase 2 (947 aa).

Positions 1–103 are disordered; it reads MSSTEAKQYK…TDGVHAGQRV (103 aa). The Cytoplasmic segment spans residues 1-144; that stretch reads MSSTEAKQYK…AEENESLIVK (144 aa). A compositionally biased stretch (basic and acidic residues) spans 7 to 22; the sequence is KQYKEKPSKEYLHASD. Low complexity predominate over residues 26 to 61; that stretch reads PANNSAASSSSSSSTSTSASSSAAAVPRKAAAASAA. Residues 62 to 74 show a composition bias toward acidic residues; it reads DDSDSDEDIDQLI. Residues 145-165 traverse the membrane as a helical segment; sequence FLMFFVGPIQFVMEAAAILAA. Residues 166 to 169 are Extracellular-facing; sequence GLSD. A helical membrane pass occupies residues 170–189; that stretch reads WVDVGVICALLLLNASVGFI. The Cytoplasmic segment spans residues 190–320; the sequence is QEFQAGSIVD…VEGHFTEVLN (131 aa). A helical transmembrane segment spans residues 321 to 342; that stretch reads GIGIILLVLVIATLLLVWTACF. At 343–353 the chain is on the extracellular side; it reads YRTVGIVSILR. A helical transmembrane segment spans residues 354 to 376; the sequence is YTLGITIIGVPVGLPAVVTTTMA. The Cytoplasmic portion of the chain corresponds to 377-748; it reads VGAAYLAKKQ…IAILNNSLDI (372 aa). The active-site 4-aspartylphosphate intermediate is aspartate 407. The Mg(2+) site is built by aspartate 663 and aspartate 667. A helical membrane pass occupies residues 749–767; that stretch reads NLIVFIAIFADVATLTIAY. Topologically, residues 768–783 are extracellular; that stretch reads DNAPYAPEPVKWNLPR. Residues 784 to 803 traverse the membrane as a helical segment; that stretch reads LWGMSIILGIVLAIGSWITL. The Cytoplasmic segment spans residues 804–853; that stretch reads TTMFLPNGGIIQNFGAMNGVMFLQISLTENWLIFVTRAAGPFWSSIPSWQ. The chain crosses the membrane as a helical span at residues 854–874; that stretch reads LAGAVFAVDIIATMFTLFGWW. Over 875-886 the chain is Extracellular; sequence SENWTDIVSVVR. A helical membrane pass occupies residues 887-903; it reads VWIWSIGIFCVLGGFYY. Topologically, residues 904-947 are cytoplasmic; that stretch reads IMSTSQAFDRLMNGKSLKEKKSTRSVEDFMAAMQRVSTQHEKSS.

This sequence belongs to the cation transport ATPase (P-type) (TC 3.A.3) family. Type IIIA subfamily.

The protein localises to the cell membrane. It carries out the reaction ATP + H2O + H(+)(in) = ADP + phosphate + 2 H(+)(out). Its function is as follows. The plasma membrane ATPase of plants and fungi is a hydrogen ion pump. The proton gradient it generates drives the active transport of nutrients by H(+)-symport. The resulting external acidification and/or internal alkinization may mediate growth responses. In Saccharomyces cerevisiae (strain ATCC 204508 / S288c) (Baker's yeast), this protein is Plasma membrane ATPase 2 (PMA2).